The chain runs to 438 residues: Anaerobic glycerol-3-phosphate dehydrogenase subunit B (438 aa).

This sequence belongs to the anaerobic G-3-P dehydrogenase subunit B family. Composed of a catalytic GlpA/B dimer and of membrane bound GlpC. The cofactor is FMN.

The enzyme catalyses a quinone + sn-glycerol 3-phosphate = dihydroxyacetone phosphate + a quinol. Its pathway is polyol metabolism; glycerol degradation via glycerol kinase pathway; glycerone phosphate from sn-glycerol 3-phosphate (anaerobic route): step 1/1. Conversion of glycerol 3-phosphate to dihydroxyacetone. Uses fumarate or nitrate as electron acceptor. This chain is Anaerobic glycerol-3-phosphate dehydrogenase subunit B, found in Vibrio vulnificus (strain YJ016).